Reading from the N-terminus, the 89-residue chain is LYR motif-containing protein 4 (89 aa).

Positions 44 to 71 (KNIADSEKIEELLNKAKANLEVIQRQGT) form a coiled coil.

The protein belongs to the complex I LYR family.

It is found in the mitochondrion. The protein localises to the nucleus. It participates in cofactor biosynthesis; iron-sulfur cluster biosynthesis. Its function is as follows. Required for nuclear and mitochondrial iron-sulfur protein biosynthesis. In Taeniopygia guttata (Zebra finch), this protein is LYR motif-containing protein 4 (LYRM4).